The following is a 449-amino-acid chain: Exodeoxyribonuclease 7 large subunit (449 aa).

Belongs to the XseA family. Heterooligomer composed of large and small subunits.

Its subcellular location is the cytoplasm. The enzyme catalyses Exonucleolytic cleavage in either 5'- to 3'- or 3'- to 5'-direction to yield nucleoside 5'-phosphates.. Its function is as follows. Bidirectionally degrades single-stranded DNA into large acid-insoluble oligonucleotides, which are then degraded further into small acid-soluble oligonucleotides. This Lacticaseibacillus casei (strain BL23) (Lactobacillus casei) protein is Exodeoxyribonuclease 7 large subunit.